A 223-amino-acid polypeptide reads, in one-letter code: MQLKPMEINPEMLNKVLTRLGVGGDWKFVDVLGLEEDVLGTVPAPACALLLLFPLTAQHENFRKKQIEELKGQEVSPKVYFMKQTVGNSCGTIGLIHAVANNQDKLNFDDGSVLKQFISETAKLSPEDRAKCFEKNEAIQAAHDAVAQEGQCRVDDEVNFHFILFNNVDGHLYELDGRMPFPINHGSNSDESVLKGAAEICRQFTEREEGEVRFSAVALCKCA.

M1 is subject to N-acetylmethionine. In terms of domain architecture, UCH catalytic spans 2 to 221; it reads QLKPMEINPE…VRFSAVALCK (220 aa). The segment at 5–10 is interaction with ubiquitin; sequence PMEINP. The active-site Nucleophile is C90. S125 is modified (phosphoserine). Residue H161 is the Proton donor of the active site. The interaction with ubiquitin stretch occupies residues 211 to 216; the sequence is EVRFSA. C220 carries the S-farnesyl cysteine lipid modification. The propeptide at 221–223 is removed in mature form; that stretch reads KCA.

This sequence belongs to the peptidase C12 family. Monomer. Homodimer. Interacts with COPS5 and SNCA. In terms of processing, O-glycosylated.

It is found in the cytoplasm. It localises to the endoplasmic reticulum membrane. It catalyses the reaction Thiol-dependent hydrolysis of ester, thioester, amide, peptide and isopeptide bonds formed by the C-terminal Gly of ubiquitin (a 76-residue protein attached to proteins as an intracellular targeting signal).. Its function is as follows. Ubiquitin-protein hydrolase involved both in the processing of ubiquitin precursors and of ubiquitinated proteins. This enzyme is a thiol protease that recognizes and hydrolyzes a peptide bond at the C-terminal glycine of ubiquitin. Also binds to free monoubiquitin and may prevent its degradation in lysosomes. The homodimer may have ATP-independent ubiquitin ligase activity. The sequence is that of Ubiquitin carboxyl-terminal hydrolase isozyme L1 (UCHL1) from Monodelphis domestica (Gray short-tailed opossum).